The primary structure comprises 218 residues: CTD kinase subunit gamma (218 aa).

The CID domain occupies 2-138 (DPFEGRMTFL…DAMATVEAHE (137 aa)). A disordered region spans residues 137–157 (HEQASKSGDTSTSGAISKNDI). Residues 141 to 152 (SKSGDTSTSGAI) show a composition bias toward polar residues.

It belongs to the CTK3 family. In terms of assembly, CTDK-I consists of three subunits, ctk1/lsk1, ctk2/lsc1 and ctk3 (also called alpha, beta and gamma).

Its subcellular location is the cytoplasm. The protein localises to the nucleus. Functionally, subunit of the CTDK-I complex, which hyperphosphorylates the C-terminal heptapeptide repeat domain (CTD) of the largest RNA polymerase II subunit. As part of the CTDK-I complex, involved in RNA polymerase II transcriptional elongation and pre-mRNA 3'-end processing. Together with ctk2, required for ctk1/lsk1 CTD kinase activation. This chain is CTD kinase subunit gamma, found in Schizosaccharomyces pombe (strain 972 / ATCC 24843) (Fission yeast).